The sequence spans 510 residues: NAD(P)H-quinone oxidoreductase subunit 2 B, chloroplastic (510 aa).

13 helical membrane passes run 24 to 44 (LLLF…GLIL), 57 to 77 (IPWL…ALLF), 99 to 119 (IFQF…VEYI), 124 to 144 (MAIT…MFLC), 149 to 169 (LITI…LSGY), 183 to 203 (YLLM…WLYG), 227 to 247 (PGIS…LSPA), 295 to 315 (WHLH…LIAI), 323 to 343 (MLAY…IVGD), 347 to 367 (GYAS…GTFA), 395 to 415 (ALSL…AGFF), 418 to 438 (LHLF…IGLL), and 484 to 504 (MIVC…IIAI).

The protein belongs to the complex I subunit 2 family. As to quaternary structure, NDH is composed of at least 16 different subunits, 5 of which are encoded in the nucleus.

The protein localises to the plastid. It is found in the chloroplast thylakoid membrane. The catalysed reaction is a plastoquinone + NADH + (n+1) H(+)(in) = a plastoquinol + NAD(+) + n H(+)(out). The enzyme catalyses a plastoquinone + NADPH + (n+1) H(+)(in) = a plastoquinol + NADP(+) + n H(+)(out). NDH shuttles electrons from NAD(P)H:plastoquinone, via FMN and iron-sulfur (Fe-S) centers, to quinones in the photosynthetic chain and possibly in a chloroplast respiratory chain. The immediate electron acceptor for the enzyme in this species is believed to be plastoquinone. Couples the redox reaction to proton translocation, and thus conserves the redox energy in a proton gradient. This chain is NAD(P)H-quinone oxidoreductase subunit 2 B, chloroplastic, found in Buxus microphylla (Littleleaf boxwood).